A 79-amino-acid polypeptide reads, in one-letter code: Acyl carrier protein (79 aa).

A Carrier domain is found at 2–77; the sequence is SSIEERVKKI…QAVDYINKHL (76 aa). At Ser-37 the chain carries O-(pantetheine 4'-phosphoryl)serine.

The protein belongs to the acyl carrier protein (ACP) family. 4'-phosphopantetheine is transferred from CoA to a specific serine of apo-ACP by AcpS. This modification is essential for activity because fatty acids are bound in thioester linkage to the sulfhydryl of the prosthetic group.

It localises to the cytoplasm. Its pathway is lipid metabolism; fatty acid biosynthesis. Its function is as follows. Carrier of the growing fatty acid chain in fatty acid biosynthesis. This chain is Acyl carrier protein, found in Alkalilimnicola ehrlichii (strain ATCC BAA-1101 / DSM 17681 / MLHE-1).